The following is a 518-amino-acid chain: Cytochrome P450 709B3 (518 aa).

A helical membrane pass occupies residues 3–23; sequence LISTINLLTIVLLLFVVSKIW. C465 is a binding site for heme.

The protein belongs to the cytochrome P450 family. The cofactor is heme. Highly expressed in rosette leaves and siliques, and at lower levels in flowers.

The protein localises to the membrane. In terms of biological role, plays a role in abscisic acid (ABA) and salt stress response. May regulate the salt stress response independently of well-characterized pathways. Does not function as cytokinin hydroxylase in yeast heterologous system. In Arabidopsis thaliana (Mouse-ear cress), this protein is Cytochrome P450 709B3.